The chain runs to 131 residues: Phosphoribosyl-AMP cyclohydrolase (131 aa).

Asp78 contributes to the Mg(2+) binding site. Cys79 contributes to the Zn(2+) binding site. Mg(2+)-binding residues include Asp80 and Asp82. Zn(2+)-binding residues include Cys96 and Cys103.

It belongs to the PRA-CH family. Homodimer. The cofactor is Mg(2+). Zn(2+) serves as cofactor.

It localises to the cytoplasm. It carries out the reaction 1-(5-phospho-beta-D-ribosyl)-5'-AMP + H2O = 1-(5-phospho-beta-D-ribosyl)-5-[(5-phospho-beta-D-ribosylamino)methylideneamino]imidazole-4-carboxamide. It participates in amino-acid biosynthesis; L-histidine biosynthesis; L-histidine from 5-phospho-alpha-D-ribose 1-diphosphate: step 3/9. Catalyzes the hydrolysis of the adenine ring of phosphoribosyl-AMP. The polypeptide is Phosphoribosyl-AMP cyclohydrolase (Neisseria meningitidis serogroup C / serotype 2a (strain ATCC 700532 / DSM 15464 / FAM18)).